Consider the following 237-residue polypeptide: Lectin alpha chain (237 aa).

Residues E8 and D10 each contribute to the Mn(2+) site. The Ca(2+) site is built by D10, Y12, N14, and D19. Y12 contributes to the a carbohydrate binding site. Residues D19, H24, and S34 each contribute to the Mn(2+) site. 99 to 100 lines the a carbohydrate pocket; sequence LY. D208 contacts Ca(2+). R228 serves as a coordination point for a carbohydrate.

This sequence belongs to the leguminous lectin family. Equilibrium between homodimer and homotetramer. Oligomerization is pH-dependent with homotetramers forming at pH 6.5 and above. The beta and gamma chains are produced by partial proteolytic processing of the lectin alpha chain by an asparaginyl endopeptidase. Mixture of 60% alpha lectin and 40% of its beta and gamma proteolytic fragments.

D-mannose/D-glucose-binding lectin. Has anti-inflammatory activity in rats. Induces histamine release in mast cells from rat. Induces lymphocyte proliferation and IFNG production. In Dioclea guianensis, this protein is Lectin alpha chain.